The chain runs to 480 residues: DNA repair protein RadA (480 aa).

Residues 10-27 form a C4-type zinc finger; the sequence is CSECRHVSAKWVGRCLEC. 95 to 102 lines the ATP pocket; sequence GDPGVGKS. The RadA KNRFG motif signature appears at 254 to 258; the sequence is KNRFG. Residues 353 to 480 are lon-protease-like; that stretch reads DIYLSTVGGM…TGHVPLGRGT (128 aa). The disordered stretch occupies residues 459–480; it reads GTTLATPPSHSGTGHVPLGRGT. A compositionally biased stretch (polar residues) spans 461 to 470; it reads TLATPPSHSG.

This sequence belongs to the RecA family. RadA subfamily.

In terms of biological role, DNA-dependent ATPase involved in processing of recombination intermediates, plays a role in repairing DNA breaks. Stimulates the branch migration of RecA-mediated strand transfer reactions, allowing the 3' invading strand to extend heteroduplex DNA faster. Binds ssDNA in the presence of ADP but not other nucleotides, has ATPase activity that is stimulated by ssDNA and various branched DNA structures, but inhibited by SSB. Does not have RecA's homology-searching function. This is DNA repair protein RadA from Mycobacterium tuberculosis (strain CDC 1551 / Oshkosh).